A 633-amino-acid polypeptide reads, in one-letter code: E3 ubiquitin-protein ligase ZSWIM2 (633 aa).

The SWIM-type zinc-finger motif lies at 54–87; that stretch reads FRVFLGNPHVCNCSTFPKGGELCKHICWVLLKKF. The segment at 147 to 198 adopts an RING-type 1 zinc-finger fold; the sequence is CSICQELLLEKKLPVTFCRFGCGNSIHIKCMKILANYQSTSNTSMLKCPLCR. The ZZ-type zinc-finger motif lies at 229-280; it reads HLGIPCNNCKQFPIEGKCYKCTECIEYHLCQECFDSCCHLSHTFTFREKRNQ. Residues C234, C237, C249, C252, C258, C261, H267, and H270 each contribute to the Zn(2+) site. An RING-type 2 zinc finger spans residues 344–388; it reads CLLCLKAFHLGQHTRLLPCTHKFHRKCIDNWLFHKCNSCPIDGQV.

In terms of assembly, dimer. Interacts with UBE2D1. Polyubiquitinated. Polyubiquitination is followed by degradation via the proteasome. In terms of tissue distribution, expression is testis-specific.

The catalysed reaction is S-ubiquitinyl-[E2 ubiquitin-conjugating enzyme]-L-cysteine + [acceptor protein]-L-lysine = [E2 ubiquitin-conjugating enzyme]-L-cysteine + N(6)-ubiquitinyl-[acceptor protein]-L-lysine.. E3 ubiquitin-protein ligase involved in the regulation of Fas-, DR3- and DR4-mediated apoptosis. Functions in conjunction with the UBE2D1, UBE2D3 and UBE2E1 E2 ubiquitin-conjugating enzymes. The polypeptide is E3 ubiquitin-protein ligase ZSWIM2 (Homo sapiens (Human)).